We begin with the raw amino-acid sequence, 460 residues long: Polygalacturonase (460 aa).

The first 26 residues, Met-1–Gly-26, serve as a signal peptide directing secretion. N-linked (GlcNAc...) asparagine glycosylation is present at Asn-280. The active-site Proton donor is Asp-292. His-315 is a catalytic residue. A glycan (N-linked (GlcNAc...) asparagine) is linked at Asn-421.

The protein belongs to the glycosyl hydrolase 28 family.

Its subcellular location is the secreted. The protein localises to the cell wall. It carries out the reaction (1,4-alpha-D-galacturonosyl)n+m + H2O = (1,4-alpha-D-galacturonosyl)n + (1,4-alpha-D-galacturonosyl)m.. Functionally, acts in concert with the pectinesterase, in the ripening process. Is involved in cell wall metabolism, specifically in polyuronide degradation. In Malus domestica (Apple), this protein is Polygalacturonase.